Consider the following 148-residue polypeptide: uncharacterized protein (148 aa).

The segment covering 97-112 (KKLDEQRMPGKPKNTE) has biased composition (basic and acidic residues). The segment at 97 to 126 (KKLDEQRMPGKPKNTEGSKSTIRKKANVGN) is disordered.

This is an uncharacterized protein from Caenorhabditis elegans.